The chain runs to 716 residues: Fatty acid oxidation complex subunit alpha (716 aa).

The interval 1 to 189 (MIYQSPTIQV…KVGAVDAVVA (189 aa)) is enoyl-CoA hydratase/isomerase. Substrate is bound at residue D296. The 3-hydroxyacyl-CoA dehydrogenase stretch occupies residues 311-716 (KDVKSAAVLG…AANNGSYYQA (406 aa)). Residues M324, D343, 400–402 (VVE), K407, and S429 each bind NAD(+). Residue H450 is the For 3-hydroxyacyl-CoA dehydrogenase activity of the active site. Residue N453 coordinates NAD(+). Substrate contacts are provided by N500 and Y660.

It in the N-terminal section; belongs to the enoyl-CoA hydratase/isomerase family. This sequence in the C-terminal section; belongs to the 3-hydroxyacyl-CoA dehydrogenase family. As to quaternary structure, heterotetramer of two alpha chains (FadB) and two beta chains (FadA).

The enzyme catalyses a (3S)-3-hydroxyacyl-CoA + NAD(+) = a 3-oxoacyl-CoA + NADH + H(+). It carries out the reaction a (3S)-3-hydroxyacyl-CoA = a (2E)-enoyl-CoA + H2O. The catalysed reaction is a 4-saturated-(3S)-3-hydroxyacyl-CoA = a (3E)-enoyl-CoA + H2O. It catalyses the reaction (3S)-3-hydroxybutanoyl-CoA = (3R)-3-hydroxybutanoyl-CoA. The enzyme catalyses a (3Z)-enoyl-CoA = a 4-saturated (2E)-enoyl-CoA. It carries out the reaction a (3E)-enoyl-CoA = a 4-saturated (2E)-enoyl-CoA. The protein operates within lipid metabolism; fatty acid beta-oxidation. Functionally, involved in the aerobic and anaerobic degradation of long-chain fatty acids via beta-oxidation cycle. Catalyzes the formation of 3-oxoacyl-CoA from enoyl-CoA via L-3-hydroxyacyl-CoA. It can also use D-3-hydroxyacyl-CoA and cis-3-enoyl-CoA as substrate. This Shewanella sp. (strain ANA-3) protein is Fatty acid oxidation complex subunit alpha.